A 423-amino-acid polypeptide reads, in one-letter code: Putative competence-damage inducible protein (423 aa).

The protein belongs to the CinA family.

The chain is Putative competence-damage inducible protein from Streptococcus uberis (strain ATCC BAA-854 / 0140J).